We begin with the raw amino-acid sequence, 195 residues long: 3-isopropylmalate dehydratase small subunit (195 aa).

This sequence belongs to the LeuD family. LeuD type 1 subfamily. Heterodimer of LeuC and LeuD.

It catalyses the reaction (2R,3S)-3-isopropylmalate = (2S)-2-isopropylmalate. Its pathway is amino-acid biosynthesis; L-leucine biosynthesis; L-leucine from 3-methyl-2-oxobutanoate: step 2/4. In terms of biological role, catalyzes the isomerization between 2-isopropylmalate and 3-isopropylmalate, via the formation of 2-isopropylmaleate. The sequence is that of 3-isopropylmalate dehydratase small subunit from Oenococcus oeni (strain ATCC BAA-331 / PSU-1).